We begin with the raw amino-acid sequence, 424 residues long: Zona pellucida sperm-binding protein 3 (424 aa).

An N-terminal signal peptide occupies residues 1–22 (MELSYRLFICLLLWGSTELCYP). Residue Q23 is modified to Pyrrolidone carboxylic acid. At 23–387 (QPLWLLQGGA…QWALPSDTSV (365 aa)) the chain is on the extracellular side. The ZP domain maps to 45–307 (ECQEATLMVM…KACSFSKPSN (263 aa)). Disulfide bonds link C46/C140 and C78/C99. 2 N-linked (GlcNAc...) asparagine glycosylation sites follow: N125 and N147. O-linked (GalNAc...) threonine glycosylation is found at T156, T162, and T163. Cystine bridges form between C217–C282 and C239–C300. N272 carries N-linked (GlcNAc...) asparagine glycosylation. Residues 330-356 (PSHSRRQPHVMSQWSRSASRNRRHVTE) form a disordered region. A propeptide spans 351–424 (RRHVTEEADV…TASHPVSASE (74 aa)) (removed in mature form). A helical transmembrane segment spans residues 388–408 (VLLGVGLAVVVSLTLTAVILV). The Cytoplasmic segment spans residues 409–424 (LTRRCRTASHPVSASE).

The protein belongs to the ZP domain family. ZPC subfamily. Polymers of ZP2 and ZP3 organized into long filaments cross-linked by ZP1 homodimers. Interacts with ZP1 and ZP2. Proteolytically cleaved before the transmembrane segment to yield the secreted ectodomain incorporated in the zona pellucida. In terms of processing, N-glycosylated. Post-translationally, O-glycosylated; removal of O-linked glycans may play an important role in the post-fertilization block to polyspermy. In terms of tissue distribution, expressed in oocytes (at protein level).

Its subcellular location is the zona pellucida. The protein resides in the cell membrane. Functionally, component of the zona pellucida, an extracellular matrix surrounding oocytes which mediates sperm binding, induction of the acrosome reaction and prevents post-fertilization polyspermy. The zona pellucida is composed of 3 to 4 glycoproteins, ZP1, ZP2, ZP3, and ZP4. ZP3 is essential for sperm binding and zona matrix formation. This Homo sapiens (Human) protein is Zona pellucida sperm-binding protein 3 (ZP3).